The following is a 149-amino-acid chain: Ribosome-binding factor A (149 aa).

It belongs to the RbfA family. Monomer. Binds 30S ribosomal subunits, but not 50S ribosomal subunits or 70S ribosomes.

The protein resides in the cytoplasm. Functionally, one of several proteins that assist in the late maturation steps of the functional core of the 30S ribosomal subunit. Associates with free 30S ribosomal subunits (but not with 30S subunits that are part of 70S ribosomes or polysomes). Required for efficient processing of 16S rRNA. May interact with the 5'-terminal helix region of 16S rRNA. This is Ribosome-binding factor A from Caulobacter vibrioides (strain ATCC 19089 / CIP 103742 / CB 15) (Caulobacter crescentus).